The following is a 560-amino-acid chain: Hypermethylated in cancer 2 protein (560 aa).

The BTB domain maps to 24–87; the sequence is CDVIIVVENA…IYTGKLLSSD (64 aa). Disordered regions lie at residues 122-163 and 183-367; these read RSLL…KTKR and HCTT…GGRN. Composition is skewed to polar residues over residues 126–153 and 183–203; these read NKPTTPTNGRTSRNQRLSSTPVTPNQMS and HCTTSNSLSPSTSKNGSNGSC. Residues 224–242 show a composition bias toward low complexity; it reads EEVSPSSIPQESPQSASES. The span at 243–259 shows a compositional bias: polar residues; the sequence is TANSASFDENPNTQNLT. Residues 296-308 are compositionally biased toward basic and acidic residues; it reads PKSEGKKGEDMER. A compositionally biased stretch (low complexity) spans 348–362; it reads ENGQEQSEESGQSEN. C2H2-type zinc fingers lie at residues 387–409, 450–472, 478–500, 506–528, and 534–556; these read YVCIPCGKGFPSSEELNAHVETH, FSCSVCNKSYKDPATLRQHEKTH, FPCNICGKMFTQRGTMTRHMRSH, FACEECGMRFTRQYRLTEHMRVH, and YECQLCGGKFTQQRNLISHLRMH.

It belongs to the krueppel C2H2-type zinc-finger protein family. Hic subfamily.

It localises to the nucleus. Transcriptional repressor. This chain is Hypermethylated in cancer 2 protein (hic2), found in Danio rerio (Zebrafish).